Reading from the N-terminus, the 273-residue chain is Shikimate dehydrogenase (NADP(+)) (273 aa).

Shikimate is bound by residues 18-20 (SKS) and T65. The Proton acceptor role is filled by K69. NADP(+) is bound at residue E81. The shikimate site is built by N90 and D105. NADP(+)-binding positions include 130–134 (GAGGA), 154–159 (NRTHSK), and M217. Residue Y219 participates in shikimate binding. G240 serves as a coordination point for NADP(+).

It belongs to the shikimate dehydrogenase family. As to quaternary structure, homodimer.

It carries out the reaction shikimate + NADP(+) = 3-dehydroshikimate + NADPH + H(+). The protein operates within metabolic intermediate biosynthesis; chorismate biosynthesis; chorismate from D-erythrose 4-phosphate and phosphoenolpyruvate: step 4/7. Functionally, involved in the biosynthesis of the chorismate, which leads to the biosynthesis of aromatic amino acids. Catalyzes the reversible NADPH linked reduction of 3-dehydroshikimate (DHSA) to yield shikimate (SA). This chain is Shikimate dehydrogenase (NADP(+)), found in Janthinobacterium sp. (strain Marseille) (Minibacterium massiliensis).